We begin with the raw amino-acid sequence, 216 residues long: UPF0598 protein C8orf82 (216 aa).

This sequence belongs to the UPF0598 family.

The chain is UPF0598 protein C8orf82 (C8orf82) from Homo sapiens (Human).